Here is a 156-residue protein sequence, read N- to C-terminus: Small ribosomal subunit protein uS7 (156 aa).

This sequence belongs to the universal ribosomal protein uS7 family. In terms of assembly, part of the 30S ribosomal subunit. Contacts proteins S9 and S11.

In terms of biological role, one of the primary rRNA binding proteins, it binds directly to 16S rRNA where it nucleates assembly of the head domain of the 30S subunit. Is located at the subunit interface close to the decoding center, probably blocks exit of the E-site tRNA. The protein is Small ribosomal subunit protein uS7 of Pectobacterium atrosepticum (strain SCRI 1043 / ATCC BAA-672) (Erwinia carotovora subsp. atroseptica).